We begin with the raw amino-acid sequence, 303 residues long: Porphobilinogen deaminase (303 aa).

An S-(dipyrrolylmethanemethyl)cysteine modification is found at Cys-240.

This sequence belongs to the HMBS family. As to quaternary structure, monomer. Dipyrromethane is required as a cofactor.

It carries out the reaction 4 porphobilinogen + H2O = hydroxymethylbilane + 4 NH4(+). It functions in the pathway porphyrin-containing compound metabolism; protoporphyrin-IX biosynthesis; coproporphyrinogen-III from 5-aminolevulinate: step 2/4. Functionally, tetrapolymerization of the monopyrrole PBG into the hydroxymethylbilane pre-uroporphyrinogen in several discrete steps. The protein is Porphobilinogen deaminase of Stenotrophomonas maltophilia (strain R551-3).